The primary structure comprises 275 residues: Hydroxyethylthiazole kinase (275 aa).

Residue Met50 participates in substrate binding. ATP contacts are provided by Arg126 and Ser171. Ala200 contributes to the substrate binding site.

Belongs to the Thz kinase family. Requires Mg(2+) as cofactor.

The enzyme catalyses 5-(2-hydroxyethyl)-4-methylthiazole + ATP = 4-methyl-5-(2-phosphooxyethyl)-thiazole + ADP + H(+). Its pathway is cofactor biosynthesis; thiamine diphosphate biosynthesis; 4-methyl-5-(2-phosphoethyl)-thiazole from 5-(2-hydroxyethyl)-4-methylthiazole: step 1/1. Its function is as follows. Catalyzes the phosphorylation of the hydroxyl group of 4-methyl-5-beta-hydroxyethylthiazole (THZ). The chain is Hydroxyethylthiazole kinase from Acinetobacter baumannii (strain SDF).